A 151-amino-acid chain; its full sequence is MAKFEQKLTDLLRPAVEETGKTLHGIEYISAGNNSVLRLFIDHENGINVDDCAEVSRQVGAILDVEDPISSEYSLEVSSPGVDRPLFELAHFQEVIGETINVKISMPLNGRRKFKGPLVAIENDTLIVEVDSIDYELAISNIDKANLVAKF.

It belongs to the RimP family.

It is found in the cytoplasm. In terms of biological role, required for maturation of 30S ribosomal subunits. This is Ribosome maturation factor RimP from Colwellia psychrerythraea (strain 34H / ATCC BAA-681) (Vibrio psychroerythus).